Consider the following 305-residue polypeptide: UPF0450 protein C17orf58 homolog (305 aa).

An N-terminal signal peptide occupies residues methionine 1 to alanine 22. The interval glutamate 18–alanine 160 is disordered. Over residues valine 21–proline 39 the composition is skewed to basic and acidic residues. 3 disulfide bridges follow: cysteine 159–cysteine 233, cysteine 163–cysteine 237, and cysteine 174–cysteine 304. Positions cysteine 159–cysteine 304 constitute an NTR domain.

Belongs to the UPF0450 family.

The polypeptide is UPF0450 protein C17orf58 homolog (Mus musculus (Mouse)).